The primary structure comprises 459 residues: Cysteine--tRNA ligase (459 aa).

Cysteine 28 is a Zn(2+) binding site. The 'HIGH' region motif lies at 30–40 (VTIYDLCHIGH). Zn(2+) contacts are provided by cysteine 209, histidine 234, and glutamate 238. A 'KMSKS' region motif is present at residues 266-270 (KMSKS). Position 269 (lysine 269) interacts with ATP.

This sequence belongs to the class-I aminoacyl-tRNA synthetase family. As to quaternary structure, monomer. It depends on Zn(2+) as a cofactor.

The protein resides in the cytoplasm. The catalysed reaction is tRNA(Cys) + L-cysteine + ATP = L-cysteinyl-tRNA(Cys) + AMP + diphosphate. This Vibrio cholerae serotype O1 (strain ATCC 39541 / Classical Ogawa 395 / O395) protein is Cysteine--tRNA ligase.